Here is a 441-residue protein sequence, read N- to C-terminus: MSSGFFGDIQKIKYEGPDSTNPLAYRFYNPDEVVAGKRLEDHLRFAVAYWHSFAWPGGDPFGGQTFDRPWFPKAGGIDTMELAKLKADVAFEMFSLLGAPYFCFHDADVRPEGKDFSESAARLDEIADYFAGKMKQTGVKLLWGTANLFSHRRFMSGAATNPDPDVFAYAAATVKSCIDVTKRLKGENYVLWGGREGYETLLNTDLAREQEQAGRFLSLVVDYKHKIGFKGTILIEPKPQEPTKHQYDYDVATVYGFLKRFGLEKEVKLNIEQGHAILAGHSFEHELALANALGVFGSIDMNRNDYQSGWDTDQFPNNVPEMALAYYQILQAGGFKTGGTNFDAKLRRQSLDPQDLLIGHIGGMDACARGLKAAARMVEDKALSAPLAERYAGWNSAEGKAMLSGKRTLEDIAERVVKKKIEPQPRSGRQELLENIVNRYV.

Active-site residues include His-105 and Asp-108. 7 residues coordinate Mg(2+): Glu-236, Glu-272, His-275, Asp-300, Asp-311, Asp-313, and Asp-343.

This sequence belongs to the xylose isomerase family. Homotetramer. Mg(2+) is required as a cofactor.

It is found in the cytoplasm. The enzyme catalyses alpha-D-xylose = alpha-D-xylulofuranose. The sequence is that of Xylose isomerase from Mesorhizobium japonicum (strain LMG 29417 / CECT 9101 / MAFF 303099) (Mesorhizobium loti (strain MAFF 303099)).